A 331-amino-acid polypeptide reads, in one-letter code: Serpentine receptor class alpha-1 (331 aa).

7 helical membrane-spanning segments follow: residues 22 to 42 (FAVF…VIAV), 57 to 77 (IILV…AIIS), 104 to 124 (YTEV…GILI), 143 to 163 (VGII…QIII), 189 to 209 (FLFI…AVMF), 238 to 258 (ICVV…GVLI), and 274 to 294 (LITW…ILIF).

The protein belongs to the nematode receptor-like protein sra family.

The protein resides in the membrane. This chain is Serpentine receptor class alpha-1 (sra-1), found in Caenorhabditis elegans.